The sequence spans 641 residues: Epithelial sodium channel subunit beta (641 aa).

The Cytoplasmic portion of the chain corresponds to 1 to 50 (MHLKKYLLKGLHRLQKGPGYSYKELLVWYCNNTNTHGPKRIICEGPKKKA). Residues 51–71 (MWFLITLLFTSLVCWQWGVFI) form a helical membrane-spanning segment. The Extracellular portion of the chain corresponds to 72–533 (RTYLSWEVSV…GGQFGFWMGG (462 aa)). Disulfide bonds link C98-C273, C185-C190, C197-C204, C250-C257, C362-C449, C387-C445, C391-C441, C400-C427, and C402-C416. The N-linked (GlcNAc...) asparagine glycan is linked to N141. Residue N261 is glycosylated (N-linked (GlcNAc...) asparagine). The helical transmembrane segment at 534–554 (SVLCLIEFGEILIDFVWITII) threads the bilayer. Topologically, residues 555-641 (KLVAFAKSLR…IESDSEGDAI (87 aa)) are cytoplasmic. A disordered region spans residues 593 to 624 (PDVARPGPDPGTYPDEQTLPIPGTPPPNYDSL). The short motif at 617-621 (PPPNY) is the PY motif; recruits WW domain-containing proteins and is thereby required for ubiquitination and inhibition of the channel by NEDD4 and NEDD4L element. Phosphoserine is present on residues S634 and S636.

This sequence belongs to the amiloride-sensitive sodium channel (TC 1.A.6) family. SCNN1B subfamily. As to quaternary structure, component of the heterotrimeric epithelial sodium channel (ENaC) composed of an alpha/SCNN1A, a beta/SCNN1B and a gamma/SCNN1G subunit. An additional delta/SCNN1D subunit can replace the alpha/SCNN1A subunit to form an alternative channel with specific properties. Interacts with WWP1 (via WW domains). Interacts with WWP2 (via WW domains); inhibits the channel. Interacts with the full-length immature form of PCSK9 (pro-PCSK9). Interacts (N-glycosylated) with BPIFA1; the interaction is direct and inhibits the proteolytic processing of SCNN1A and SCNN1G and the activation of ENaC. Post-translationally, ubiquitinated. Can be ubiquitinated at multiple sites and undergo monoubiquitination and polyubiquitination. Ubiquitination by NEDD4 or NEDD4L inhibits the ENaC channel through endocytosis, intracellular retention and degradation of its individual subunits. However, some studies could not confirm the ubiquitination of this subunit of the ENaC. In terms of processing, phosphorylated on serine and threonine residues. Aldosterone and insulin increase the basal level of phosphorylation. N-glycosylated. N-glycosylation is required for interaction with BPIFA1.

It is found in the apical cell membrane. It localises to the cytoplasmic vesicle membrane. It catalyses the reaction Na(+)(in) = Na(+)(out). With respect to regulation, originally identified and characterized by its inhibition by the diuretic drug amiloride. Its function is as follows. This is one of the three pore-forming subunits of the heterotrimeric epithelial sodium channel (ENaC), a critical regulator of sodium balance and fluid homeostasis. ENaC operates in epithelial tissues, where it mediates the electrodiffusion of sodium ions from extracellular fluid through the apical membrane of cells, with water following osmotically. It plays a key role in maintaining sodium homeostasis through electrogenic sodium reabsorption in the kidneys. Additionally, ENaC is essential for airway surface liquid homeostasis, which is crucial for proper mucus clearance. In Canis lupus familiaris (Dog), this protein is Epithelial sodium channel subunit beta.